We begin with the raw amino-acid sequence, 223 residues long: 2-C-methyl-D-erythritol 4-phosphate cytidylyltransferase (223 aa).

Belongs to the IspD/TarI cytidylyltransferase family. IspD subfamily.

The enzyme catalyses 2-C-methyl-D-erythritol 4-phosphate + CTP + H(+) = 4-CDP-2-C-methyl-D-erythritol + diphosphate. It functions in the pathway isoprenoid biosynthesis; isopentenyl diphosphate biosynthesis via DXP pathway; isopentenyl diphosphate from 1-deoxy-D-xylulose 5-phosphate: step 2/6. Its function is as follows. Catalyzes the formation of 4-diphosphocytidyl-2-C-methyl-D-erythritol from CTP and 2-C-methyl-D-erythritol 4-phosphate (MEP). This chain is 2-C-methyl-D-erythritol 4-phosphate cytidylyltransferase, found in Prochlorococcus marinus (strain MIT 9515).